The following is a 452-amino-acid chain: Tripartite motif-containing protein 49C (452 aa).

The segment at 15–56 (CPLCMNYFIDPVTIDCGHSFCRPCFYLNWQDIPFLVQCSECT) adopts an RING-type zinc-finger fold. The B box-type zinc-finger motif lies at 88 to 129 (SEEQMCGTHRETKKIFCEVDRSLLCLLCSSSQEHRYHRHRPI). Zn(2+) contacts are provided by Cys93, His96, Cys115, and His121. A B30.2/SPRY domain is found at 269–452 (ELSAGPITGL…LRPIFCCIHF (184 aa)).

The protein is Tripartite motif-containing protein 49C (TRIM49C) of Homo sapiens (Human).